An 82-amino-acid chain; its full sequence is Toxin Tpa7 (82 aa).

An N-terminal signal peptide occupies residues 1–20 (MKGMILLISCLMLIEVVVEC). An LCN-type CS-alpha/beta domain is found at 21 to 82 (KEGYPLDTLN…KIWDLKKNKC (62 aa)). 4 disulfide bridges follow: C32/C82, C36/C58, C44/C63, and C48/C65.

This sequence belongs to the long (4 C-C) scorpion toxin superfamily. Sodium channel inhibitor family. Beta subfamily. As to expression, expressed by the venom gland.

The protein resides in the secreted. Its function is as follows. Beta toxins bind voltage-independently at site-4 of sodium channels (Nav) and shift the voltage of activation toward more negative potentials thereby affecting sodium channel activation and promoting spontaneous and repetitive firing. This Tityus pachyurus (Colombian scorpion) protein is Toxin Tpa7.